The chain runs to 325 residues: Replication factor C small subunit (325 aa).

Position 44 to 51 (44 to 51) interacts with ATP; the sequence is GPPGTGKT.

This sequence belongs to the activator 1 small subunits family. RfcS subfamily. Heteromultimer composed of small subunits (RfcS) and large subunits (RfcL).

Its function is as follows. Part of the RFC clamp loader complex which loads the PCNA sliding clamp onto DNA. This is Replication factor C small subunit from Thermofilum pendens (strain DSM 2475 / Hrk 5).